The chain runs to 67 residues: uncharacterized protein (67 aa).

A run of 2 helical transmembrane segments spans residues 13-32 (IACL…GFIV) and 42-64 (RLTN…TLGL).

It is found in the membrane. This is an uncharacterized protein from Saccharomyces cerevisiae (strain ATCC 204508 / S288c) (Baker's yeast).